The chain runs to 118 residues: Large ribosomal subunit protein uL18 (118 aa).

Belongs to the universal ribosomal protein uL18 family. As to quaternary structure, part of the 50S ribosomal subunit; part of the 5S rRNA/L5/L18/L25 subcomplex. Contacts the 5S and 23S rRNAs.

In terms of biological role, this is one of the proteins that bind and probably mediate the attachment of the 5S RNA into the large ribosomal subunit, where it forms part of the central protuberance. The polypeptide is Large ribosomal subunit protein uL18 (Rickettsia felis (strain ATCC VR-1525 / URRWXCal2) (Rickettsia azadi)).